A 1755-amino-acid polypeptide reads, in one-letter code: Transposon Ty1-BL Gag-Pol polyprotein (1755 aa).

3 stretches are compositionally biased toward polar residues: residues serine 20 to aspartate 31, valine 46 to proline 55, and valine 137 to histidine 168. 3 disordered regions span residues serine 20 to proline 84, valine 137 to proline 173, and glutamine 350 to serine 420. Residues asparagine 299–histidine 401 are RNA-binding. The segment covering serine 363–arginine 372 has biased composition (basic and acidic residues). Residues threonine 373–glycine 411 are compositionally biased toward polar residues. The active-site For protease activity; shared with dimeric partner is the aspartate 461. Residues asparagine 583–cysteine 640 are integrase-type zinc finger-like. The Integrase catalytic domain maps to asparagine 660–proline 835. Mg(2+)-binding residues include aspartate 671 and aspartate 736. Residues serine 956–tyrosine 1172 are disordered. Residues serine 960–threonine 969 show a composition bias toward low complexity. 2 stretches are compositionally biased toward polar residues: residues serine 1005–serine 1017 and methionine 1031–serine 1043. Residues lysine 1044 to serine 1053 are compositionally biased toward basic and acidic residues. Polar residues-rich tracts occupy residues tyrosine 1054–glutamate 1082 and serine 1095–leucine 1106. The Bipartite nuclear localization signal signature appears at lysine 1178–arginine 1212. Residues asparagine 1338–glutamine 1476 enclose the Reverse transcriptase Ty1/copia-type domain. Mg(2+) contacts are provided by aspartate 1346, aspartate 1427, aspartate 1428, aspartate 1610, glutamate 1652, and aspartate 1685. In terms of domain architecture, RNase H Ty1/copia-type spans aspartate 1610–lysine 1752.

In terms of assembly, the capsid protein forms a homotrimer, from which the VLPs are assembled. The protease is a homodimer, whose active site consists of two apposed aspartic acid residues. Post-translationally, initially, virus-like particles (VLPs) are composed of the structural unprocessed proteins Gag and Gag-Pol, and also contain the host initiator methionine tRNA (tRNA(i)-Met) which serves as a primer for minus-strand DNA synthesis, and a dimer of genomic Ty RNA. Processing of the polyproteins occurs within the particle and proceeds by an ordered pathway, called maturation. First, the protease (PR) is released by autocatalytic cleavage of the Gag-Pol polyprotein yielding capsid protein p45 and a Pol-p154 precursor protein. This cleavage is a prerequisite for subsequent processing of Pol-p154 at the remaining sites to release the mature structural and catalytic proteins. Maturation takes place prior to the RT reaction and is required to produce transposition-competent VLPs.

The protein resides in the cytoplasm. It is found in the nucleus. The catalysed reaction is DNA(n) + a 2'-deoxyribonucleoside 5'-triphosphate = DNA(n+1) + diphosphate. It carries out the reaction Endonucleolytic cleavage to 5'-phosphomonoester.. In terms of biological role, capsid protein (CA) is the structural component of the virus-like particle (VLP), forming the shell that encapsulates the retrotransposons dimeric RNA genome. The particles are assembled from trimer-clustered units and there are holes in the capsid shells that allow for the diffusion of macromolecules. CA also has nucleocapsid-like chaperone activity, promoting primer tRNA(i)-Met annealing to the multipartite primer-binding site (PBS), dimerization of Ty1 RNA and initiation of reverse transcription. Its function is as follows. The aspartyl protease (PR) mediates the proteolytic cleavages of the Gag and Gag-Pol polyproteins after assembly of the VLP. Reverse transcriptase/ribonuclease H (RT) is a multifunctional enzyme that catalyzes the conversion of the retro-elements RNA genome into dsDNA within the VLP. The enzyme displays a DNA polymerase activity that can copy either DNA or RNA templates, and a ribonuclease H (RNase H) activity that cleaves the RNA strand of RNA-DNA heteroduplexes during plus-strand synthesis and hydrolyzes RNA primers. The conversion leads to a linear dsDNA copy of the retrotransposon that includes long terminal repeats (LTRs) at both ends. Functionally, integrase (IN) targets the VLP to the nucleus, where a subparticle preintegration complex (PIC) containing at least integrase and the newly synthesized dsDNA copy of the retrotransposon must transit the nuclear membrane. Once in the nucleus, integrase performs the integration of the dsDNA into the host genome. In Saccharomyces cerevisiae (strain ATCC 204508 / S288c) (Baker's yeast), this protein is Transposon Ty1-BL Gag-Pol polyprotein (TY1B-BL).